Here is a 516-residue protein sequence, read N- to C-terminus: 2-isopropylmalate synthase (516 aa).

Residues isoleucine 10 to alanine 271 form the Pyruvate carboxyltransferase domain. Residues aspartate 19, histidine 205, histidine 207, and asparagine 241 each contribute to the Mn(2+) site. The regulatory domain stretch occupies residues glutamate 396–proline 516.

This sequence belongs to the alpha-IPM synthase/homocitrate synthase family. LeuA type 1 subfamily. In terms of assembly, homodimer. It depends on Mn(2+) as a cofactor.

Its subcellular location is the cytoplasm. The catalysed reaction is 3-methyl-2-oxobutanoate + acetyl-CoA + H2O = (2S)-2-isopropylmalate + CoA + H(+). It participates in amino-acid biosynthesis; L-leucine biosynthesis; L-leucine from 3-methyl-2-oxobutanoate: step 1/4. Functionally, catalyzes the condensation of the acetyl group of acetyl-CoA with 3-methyl-2-oxobutanoate (2-ketoisovalerate) to form 3-carboxy-3-hydroxy-4-methylpentanoate (2-isopropylmalate). The protein is 2-isopropylmalate synthase of Acidimicrobium ferrooxidans (strain DSM 10331 / JCM 15462 / NBRC 103882 / ICP).